The primary structure comprises 378 residues: Succinyl-diaminopimelate desuccinylase (378 aa).

H77 provides a ligand contact to Zn(2+). D79 is an active-site residue. D108 provides a ligand contact to Zn(2+). The Proton acceptor role is filled by E138. Zn(2+) is bound by residues E139, E167, and H350.

The protein belongs to the peptidase M20A family. DapE subfamily. In terms of assembly, homodimer. Requires Zn(2+) as cofactor. It depends on Co(2+) as a cofactor.

It carries out the reaction N-succinyl-(2S,6S)-2,6-diaminopimelate + H2O = (2S,6S)-2,6-diaminopimelate + succinate. It functions in the pathway amino-acid biosynthesis; L-lysine biosynthesis via DAP pathway; LL-2,6-diaminopimelate from (S)-tetrahydrodipicolinate (succinylase route): step 3/3. Catalyzes the hydrolysis of N-succinyl-L,L-diaminopimelic acid (SDAP), forming succinate and LL-2,6-diaminopimelate (DAP), an intermediate involved in the bacterial biosynthesis of lysine and meso-diaminopimelic acid, an essential component of bacterial cell walls. In Erythrobacter litoralis (strain HTCC2594), this protein is Succinyl-diaminopimelate desuccinylase.